The chain runs to 177 residues: RNA pyrophosphohydrolase (177 aa).

Residues Gly6–Lys149 enclose the Nudix hydrolase domain. The Nudix box signature appears at Gly38–Gly59.

This sequence belongs to the Nudix hydrolase family. RppH subfamily. Requires a divalent metal cation as cofactor.

In terms of biological role, accelerates the degradation of transcripts by removing pyrophosphate from the 5'-end of triphosphorylated RNA, leading to a more labile monophosphorylated state that can stimulate subsequent ribonuclease cleavage. In Pectobacterium atrosepticum (strain SCRI 1043 / ATCC BAA-672) (Erwinia carotovora subsp. atroseptica), this protein is RNA pyrophosphohydrolase.